The following is a 176-amino-acid chain: Lipoprotein signal peptidase (176 aa).

Transmembrane regions (helical) follow at residues 10 to 30, 48 to 68, 78 to 98, and 102 to 122; these read LFQF…AIVL, VPVL…AFSF, YFFT…LLRM, and MVVL…NLID. Catalysis depends on residues Asp131 and Asp149. A helical membrane pass occupies residues 141-161; the sequence is HFPAFNIADSAITLGTILLLI.

It belongs to the peptidase A8 family.

It localises to the cell inner membrane. The catalysed reaction is Release of signal peptides from bacterial membrane prolipoproteins. Hydrolyzes -Xaa-Yaa-Zaa-|-(S,diacylglyceryl)Cys-, in which Xaa is hydrophobic (preferably Leu), and Yaa (Ala or Ser) and Zaa (Gly or Ala) have small, neutral side chains.. The protein operates within protein modification; lipoprotein biosynthesis (signal peptide cleavage). This protein specifically catalyzes the removal of signal peptides from prolipoproteins. The sequence is that of Lipoprotein signal peptidase from Acinetobacter baumannii (strain ATCC 17978 / DSM 105126 / CIP 53.77 / LMG 1025 / NCDC KC755 / 5377).